The sequence spans 295 residues: Sulfotransferase 1A2 (295 aa).

Residue 48–53 (KSGTTW) coordinates 3'-phosphoadenylyl sulfate. 106–108 (KTH) contacts substrate. His-108 functions as the Proton acceptor in the catalytic mechanism. Residues Arg-130, Ser-138, Tyr-193, 227–232 (TSFKEM), and 255–259 (FMRKG) each bind 3'-phosphoadenylyl sulfate.

Belongs to the sulfotransferase 1 family. As to quaternary structure, homodimer.

It localises to the cytoplasm. The enzyme catalyses a phenol + 3'-phosphoadenylyl sulfate = an aryl sulfate + adenosine 3',5'-bisphosphate + H(+). Functionally, sulfotransferase that utilizes 3'-phospho-5'-adenylyl sulfate (PAPS) as sulfonate donor to catalyze the sulfate conjugation of catecholamines, phenolic drugs and neurotransmitters. Is also responsible for the sulfonation and activation of minoxidil. Mediates the metabolic activation of carcinogenic N-hydroxyarylamines to DNA binding products and could so participate as modulating factor of cancer risk. In Homo sapiens (Human), this protein is Sulfotransferase 1A2 (SULT1A2).